A 964-amino-acid polypeptide reads, in one-letter code: Pumilio homolog 3 (964 aa).

The interval 1–22 (MMIPELGRRPMHRGNEDSSFGD) is disordered. Ser192 is subject to Phosphoserine. Disordered stretches follow at residues 204–235 (PVVQ…ASQG), 256–300 (GTPD…TSGL), and 343–388 (DGHN…VANP). 2 stretches are compositionally biased toward polar residues: residues 207–216 (QQPSRPASRN) and 223–234 (DSNNNLSPSASQ). Thr257 carries the post-translational modification Phosphothreonine. Polar residues-rich tracts occupy residues 287–300 (TSNQ…TSGL) and 356–384 (RSDQ…SGSG). Residues 606-946 (FGSSMLEEFK…HIVARVEKLV (341 aa)) enclose the PUM-HD domain. Pumilio repeat units lie at residues 626–661 (EIAG…MVYE), 662–697 (EIMP…ELGE), 698–733 (KLID…QMVK), 734–769 (ELDG…FIIS), 770–806 (TFFG…KVME), 807–842 (EILS…VIIK), 843–878 (ELAG…LLVN), and 879–920 (EMLG…LILT).

The protein localises to the cytoplasm. Functionally, sequence-specific RNA-binding protein that regulates translation and mRNA stability by binding the 3'-UTR of target mRNAs. Binds the APUM-binding elements (APBEs) in the 3'-UTR mRNA sequence of CLV1, PNH, WUS and FAS2. This Arabidopsis thaliana (Mouse-ear cress) protein is Pumilio homolog 3 (APUM3).